The following is a 300-amino-acid chain: Dihydroorotate dehydrogenase B (NAD(+)), catalytic subunit (300 aa).

Residues S20 and 44 to 45 (KG) contribute to the FMN site. Substrate contacts are provided by residues K44 and 68–72 (NSVGL). Residues N98 and N124 each coordinate FMN. N124 is a substrate binding site. C127 serves as the catalytic Nucleophile. FMN contacts are provided by K162 and I188. 189-190 (NT) contributes to the substrate binding site. Residues G214, 240-241 (GG), and 262-263 (GT) each bind FMN.

Belongs to the dihydroorotate dehydrogenase family. Type 1 subfamily. In terms of assembly, heterotetramer of 2 PyrK and 2 PyrD type B subunits. The cofactor is FMN.

It localises to the cytoplasm. It catalyses the reaction (S)-dihydroorotate + NAD(+) = orotate + NADH + H(+). The protein operates within pyrimidine metabolism; UMP biosynthesis via de novo pathway; orotate from (S)-dihydroorotate (NAD(+) route): step 1/1. Functionally, catalyzes the conversion of dihydroorotate to orotate with NAD(+) as electron acceptor. The chain is Dihydroorotate dehydrogenase B (NAD(+)), catalytic subunit (pyrD) from Caldicellulosiruptor bescii (strain ATCC BAA-1888 / DSM 6725 / KCTC 15123 / Z-1320) (Anaerocellum thermophilum).